Here is a 674-residue protein sequence, read N- to C-terminus: Glutaminase kidney isoform, mitochondrial (674 aa).

The N-terminal 54 residues, 1 to 54 (MMRLRGSAMLRELLLRPPAAVGAVLRRAQPLGTLCRRPRGGSRPTAGLVAAARL), are a transit peptide targeting the mitochondrion. Residues 56-123 (PWWGGGGRAK…PGETDAFGNS (68 aa)) are disordered. Residues 58-71 (WGGGGRAKGPGAGG) are compositionally biased toward gly residues. Residues 89–101 (PPQQQQQQQQQPG) are compositionally biased toward low complexity. An N6-succinyllysine mark is found at Lys-135 and Lys-169. A substrate-binding site is contributed by Ser-291. Position 316 is an N6-acetyllysine (Lys-316). The highly mobile activation loop stretch occupies residues 320-327 (GLRFNKLF). Residues Asn-340, Glu-386, Asn-393, Tyr-419, Tyr-471, and Val-489 each coordinate substrate. 2 ANK repeats span residues 590–619 (DSRT…VNPF) and 624–653 (WNNT…QYTP). Residues 652–674 (TPQGDSDDGKGNQTVHKNLDGLL) form a disordered region. Ser-657 carries the phosphoserine modification.

The protein belongs to the glutaminase family. In terms of assembly, homotetramer, dimer of dimers. The tetramers can assemble into rod-like oligomers (in vitro), but the physiological significance of this is not clear. Interacts with RAF1 and MAP2K2. Interacts with ATCAY; the interaction is direct and may control GLS localization, negatively regulating its activity. Post-translationally, synthesized as a 74-kDa cytosolic precursor which is proteolytically processed by the mitochondrial-processing peptidase (MPP) via a 72-kDa intermediate to yield the mature mitochondrial 68- and 65-kDa subunits.

It localises to the mitochondrion. The protein localises to the cytoplasm. Its subcellular location is the cytosol. It is found in the mitochondrion matrix. The catalysed reaction is L-glutamine + H2O = L-glutamate + NH4(+). Isoform 1 and isoform 2 are activated by phosphate, due to increased affinity for glutamine. At phosphate concentrations above 10 mM, isoform 2 is more efficient than isoform 1. Its function is as follows. Catalyzes the first reaction in the primary pathway for the renal catabolism of glutamine. Plays a role in maintaining acid-base homeostasis. Regulates the levels of the neurotransmitter glutamate, the main excitatory neurotransmitter in the brain. The sequence is that of Glutaminase kidney isoform, mitochondrial (Gls) from Mus musculus (Mouse).